A 109-amino-acid chain; its full sequence is Small ribosomal subunit protein uS10 (109 aa).

The protein belongs to the universal ribosomal protein uS10 family. In terms of assembly, part of the 30S ribosomal subunit.

In terms of biological role, involved in the binding of tRNA to the ribosomes. In Nanoarchaeum equitans (strain Kin4-M), this protein is Small ribosomal subunit protein uS10.